Reading from the N-terminus, the 382-residue chain is tRNA(Met) cytidine acetate ligase (382 aa).

Residues 7–20 (ITEYNPFHNGHVYH), G100, N153, and R178 each bind ATP.

Belongs to the TmcAL family.

It localises to the cytoplasm. It catalyses the reaction cytidine(34) in elongator tRNA(Met) + acetate + ATP = N(4)-acetylcytidine(34) in elongator tRNA(Met) + AMP + diphosphate. Functionally, catalyzes the formation of N(4)-acetylcytidine (ac(4)C) at the wobble position of elongator tRNA(Met), using acetate and ATP as substrates. First activates an acetate ion to form acetyladenylate (Ac-AMP) and then transfers the acetyl group to tRNA to form ac(4)C34. This Staphylococcus carnosus (strain TM300) protein is tRNA(Met) cytidine acetate ligase.